The sequence spans 110 residues: UPF0060 membrane protein Bcep18194_A4425 (110 aa).

4 helical membrane-spanning segments follow: residues 9–29 (ALFA…WLVL), 34–54 (PVWL…LLTL), 66–86 (YGGV…GVAL), and 88–108 (RWDV…ALQP).

This sequence belongs to the UPF0060 family.

The protein resides in the cell inner membrane. This chain is UPF0060 membrane protein Bcep18194_A4425, found in Burkholderia lata (strain ATCC 17760 / DSM 23089 / LMG 22485 / NCIMB 9086 / R18194 / 383).